A 39-amino-acid chain; its full sequence is Histone H2A (39 aa).

The segment covering 1–18 (AGRGKQGGKVRAKAKTRS) has biased composition (basic residues). The tract at residues 1–24 (AGRGKQGGKVRAKAKTRSSRAGLQ) is disordered. Position 5 is an N6-(2-hydroxyisobutyryl)lysine (Lys5). Lys5 is subject to N6-acetyllysine. At Lys9 the chain carries N6-(2-hydroxyisobutyryl)lysine; alternate. Lys9 carries the N6-lactoyllysine; alternate modification. Position 9 is an N6-succinyllysine (Lys9). Residues Lys13 and Lys15 each participate in a glycyl lysine isopeptide (Lys-Gly) (interchain with G-Cter in ubiquitin) cross-link. Lys36 bears the N6-(2-hydroxyisobutyryl)lysine; alternate mark.

It belongs to the histone H2A family. In terms of assembly, the nucleosome is a histone octamer containing two molecules each of H2A, H2B, H3 and H4 assembled in one H3-H4 heterotetramer and two H2A-H2B heterodimers. The octamer wraps approximately 147 bp of DNA. In terms of processing, monoubiquitination of C-terminus gives a specific tag for epigenetic transcriptional repression. Following DNA double-strand breaks (DSBs), it is ubiquitinated through 'Lys-63' linkage of ubiquitin moieties.

The protein resides in the nucleus. Its subcellular location is the chromosome. Its function is as follows. Core component of nucleosome. Nucleosomes wrap and compact DNA into chromatin, limiting DNA accessibility to the cellular machineries which require DNA as a template. Histones thereby play a central role in transcription regulation, DNA repair, DNA replication and chromosomal stability. DNA accessibility is regulated via a complex set of post-translational modifications of histones, also called histone code, and nucleosome remodeling. Buforins are strong antimicrobial activities in vitro against a broad-spectrum of microorganisms including fungi. Buforin II is more potent than buforin I. This Bufo gargarizans (Asian toad) protein is Histone H2A.